The following is a 405-amino-acid chain: Tyrosine-protein phosphatase non-receptor type eak-6 (405 aa).

The Tyrosine-protein phosphatase domain occupies 30–309; sequence INQRINIIAD…SFIYDIIIKY (280 aa). The Phosphocysteine intermediate role is filled by C248.

This sequence belongs to the protein-tyrosine phosphatase family. Expressed in the 2 embryonic head hypodermal cells XXXL/R.

Its subcellular location is the cytoplasm. It localises to the cell membrane. The catalysed reaction is O-phospho-L-tyrosyl-[protein] + H2O = L-tyrosyl-[protein] + phosphate. Its function is as follows. Putative phosphatase which, together with eak-4 and sdf-9, negatively regulates dauer larva formation downstream of insulin-like receptor daf-2 and in parallel of age-1, pdk-1 and akt-1. This is Tyrosine-protein phosphatase non-receptor type eak-6 from Caenorhabditis elegans.